The following is a 449-amino-acid chain: Deoxyguanosinetriphosphate triphosphohydrolase-like protein (449 aa).

The disordered stretch occupies residues methionine 1–arginine 27. Positions glutamine 7 to arginine 27 are enriched in basic and acidic residues. Residues arginine 59–alanine 255 enclose the HD domain.

This sequence belongs to the dGTPase family. Type 2 subfamily.

This chain is Deoxyguanosinetriphosphate triphosphohydrolase-like protein, found in Shewanella baltica (strain OS185).